The sequence spans 723 residues: Pentatricopeptide repeat-containing protein At5g50280, chloroplastic (723 aa).

The N-terminal 44 residues, 1–44, are a transit peptide targeting the chloroplast; it reads MSMASSSLATQSFFSSFPLSHRLHFPVPYLLLRSSFFRKPLSLS. Positions 70–97 are disordered; sequence IQQPENSTINSEESECEEEDDEEGDDFT. Residues 81–97 are compositionally biased toward acidic residues; sequence EESECEEEDDEEGDDFT. 11 PPR repeats span residues 272–306, 307–342, 343–377, 378–412, 413–447, 448–483, 484–518, 519–553, 554–588, 589–623, and 624–658; these read DVRLYNAAISGLSASQRYDDAWEVYEAMDKINVYP, DNVTCAILITTLRKAGRSAKEVWEIFEKMSEKGVKW, SQDVFGGLVKSFCDEGLKEEALVIQTEMEKKGIRS, NTIVYNTLMDAYNKSNHIEEVEGLFTEMRDKGLKP, SAATYNILMDAYARRMQPDIVETLLREMEDLGLEP, NVKSYTCLISAYGRTKKMSDMAADAFLRMKKVGLKP, SSHSYTALIHAYSVSGWHEKAYASFEEMCKEGIKP, SVETYTSVLDAFRRSGDTGKLMEIWKLMLREKIKG, TRITYNTLLDGFAKQGLYIEARDVVSEFSKMGLQP, SVMTYNMLMNAYARGGQDAKLPQLLKEMAALNLKP, and DSITYSTMIYAFVRVRDFKRAFFYHKMMVKSGQVP. The interval 700-723 is disordered; it reads TKGKKDEFWKYKTNRTTSPGRHRS. Positions 713 to 723 are enriched in polar residues; the sequence is NRTTSPGRHRS.

The protein belongs to the PPR family. P subfamily.

It is found in the plastid. Its subcellular location is the chloroplast. This Arabidopsis thaliana (Mouse-ear cress) protein is Pentatricopeptide repeat-containing protein At5g50280, chloroplastic (EMB1006).